The primary structure comprises 76 residues: Putative phosphotransferase enzyme IIA component YyzE (76 aa).

Residues 1-76 (MVTPTKHAIG…LHQKIFTVVS (76 aa)) enclose the PTS EIIA type-1 domain. His-22 functions as the Tele-phosphohistidine intermediate in the catalytic mechanism.

The protein resides in the cytoplasm. Functionally, the phosphoenolpyruvate-dependent sugar phosphotransferase system (PTS), a major carbohydrate active -transport system, catalyzes the phosphorylation of incoming sugar substrates concomitant with their translocation across the cell membrane. This chain is Putative phosphotransferase enzyme IIA component YyzE (yyzE), found in Bacillus subtilis (strain 168).